The primary structure comprises 393 residues: NAD(P)H-quinone oxidoreductase subunit H, chloroplastic (393 aa).

The protein belongs to the complex I 49 kDa subunit family. As to quaternary structure, NDH is composed of at least 16 different subunits, 5 of which are encoded in the nucleus.

It localises to the plastid. The protein localises to the chloroplast thylakoid membrane. It catalyses the reaction a plastoquinone + NADH + (n+1) H(+)(in) = a plastoquinol + NAD(+) + n H(+)(out). The catalysed reaction is a plastoquinone + NADPH + (n+1) H(+)(in) = a plastoquinol + NADP(+) + n H(+)(out). NDH shuttles electrons from NAD(P)H:plastoquinone, via FMN and iron-sulfur (Fe-S) centers, to quinones in the photosynthetic chain and possibly in a chloroplast respiratory chain. The immediate electron acceptor for the enzyme in this species is believed to be plastoquinone. Couples the redox reaction to proton translocation, and thus conserves the redox energy in a proton gradient. In Helianthus annuus (Common sunflower), this protein is NAD(P)H-quinone oxidoreductase subunit H, chloroplastic.